The primary structure comprises 360 residues: Methionine import ATP-binding protein MetN (360 aa).

A disordered region spans residues 1-22 (MSHTASTPTPEEYSAQQPSTQG). One can recognise an ABC transporter domain in the interval 25–265 (VEFRGITKVF…PQTQVAQKFV (241 aa)). Position 62–69 (62–69 (GYSGAGKS)) interacts with ATP.

This sequence belongs to the ABC transporter superfamily. Methionine importer (TC 3.A.1.24) family. In terms of assembly, the complex is composed of two ATP-binding proteins (MetN), two transmembrane proteins (MetI) and a solute-binding protein (MetQ).

Its subcellular location is the cell membrane. It catalyses the reaction L-methionine(out) + ATP + H2O = L-methionine(in) + ADP + phosphate + H(+). The enzyme catalyses D-methionine(out) + ATP + H2O = D-methionine(in) + ADP + phosphate + H(+). Part of the ABC transporter complex MetNIQ involved in methionine import. Responsible for energy coupling to the transport system. This Corynebacterium glutamicum (strain ATCC 13032 / DSM 20300 / JCM 1318 / BCRC 11384 / CCUG 27702 / LMG 3730 / NBRC 12168 / NCIMB 10025 / NRRL B-2784 / 534) protein is Methionine import ATP-binding protein MetN.